The primary structure comprises 237 residues: uncharacterized protein (237 aa).

Residues glutamate 91, glutamate 93, and aspartate 122 each contribute to the a divalent metal cation site.

Belongs to the FAH family.

This is an uncharacterized protein from Methanocaldococcus jannaschii (strain ATCC 43067 / DSM 2661 / JAL-1 / JCM 10045 / NBRC 100440) (Methanococcus jannaschii).